A 772-amino-acid polypeptide reads, in one-letter code: Polyribonucleotide nucleotidyltransferase (772 aa).

2 residues coordinate Mg(2+): D488 and D494. The region spanning 555-614 (PRLTTLKINPEKIRDVIGKGGAVIRGLQEETGTTINIDEDGTITIASTDPEKAEFAKKRI) is the KH domain. Residues 624-692 (GKVYEGPVTK…EKGRVKLSMK (69 aa)) enclose the S1 motif domain. The disordered stretch occupies residues 690–772 (SMKALTERPA…QPYAPRDSQE (83 aa)). Positions 703 to 740 (YSERPPREDRGDRGDRGGERRERSDRGDRGGDRGERAP) are enriched in basic and acidic residues. The segment covering 743-757 (NSEQQQQPRSNEQQP) has biased composition (low complexity).

The protein belongs to the polyribonucleotide nucleotidyltransferase family. Mg(2+) serves as cofactor.

The protein resides in the cytoplasm. It catalyses the reaction RNA(n+1) + phosphate = RNA(n) + a ribonucleoside 5'-diphosphate. In terms of biological role, involved in mRNA degradation. Catalyzes the phosphorolysis of single-stranded polyribonucleotides processively in the 3'- to 5'-direction. This chain is Polyribonucleotide nucleotidyltransferase, found in Variovorax paradoxus (strain S110).